The chain runs to 806 residues: Plasminogen (806 aa).

Positions 1 to 19 (MEYGKVIFLFLLFLKSGQG) are cleaved as a signal peptide. In terms of domain architecture, PAN spans 20 to 98 (ESLENYIKTE…RDVVLFEKRI (79 aa)). 21 cysteine pairs are disulfide-bonded: cysteine 49-cysteine 73, cysteine 53-cysteine 61, cysteine 103-cysteine 181, cysteine 124-cysteine 164, cysteine 152-cysteine 176, cysteine 185-cysteine 262, cysteine 188-cysteine 316, cysteine 206-cysteine 245, cysteine 234-cysteine 257, cysteine 275-cysteine 352, cysteine 296-cysteine 335, cysteine 324-cysteine 347, cysteine 371-cysteine 448, cysteine 392-cysteine 431, cysteine 420-cysteine 443, cysteine 476-cysteine 555, cysteine 497-cysteine 538, cysteine 526-cysteine 550, cysteine 563-cysteine 681, cysteine 573-cysteine 581, and cysteine 603-cysteine 619. 5 consecutive Kringle domains span residues 102 to 181 (DCKS…VPEC), 184 to 262 (ECMH…IPRC), 274 to 352 (QCLK…IPSC), 370 to 448 (ECYE…LEKC), and 475 to 555 (DCMY…IPQC). The 228-residue stretch at 577–804 (IVGGCYAQPH…YISWIEDVMK (228 aa)) folds into the Peptidase S1 domain. Position 593 is a phosphoserine (serine 593). Catalysis depends on charge relay system residues histidine 618 and aspartate 661. The residue at position 684 (serine 684) is a Phosphoserine. Intrachain disulfides connect cysteine 695-cysteine 762, cysteine 725-cysteine 741, and cysteine 752-cysteine 780. The active-site Charge relay system is serine 756.

It belongs to the peptidase S1 family. Plasminogen subfamily. As to quaternary structure, interacts with CSPG4 and AMOT. Interacts (via the Kringle domains) with HRG; the interaction tethers PLG to the cell surface and enhances its activation. Interacts (via Kringle 4 domain) with ADA; the interaction stimulates PLG activation when in complex with DPP4. Angiostatin: Interacts with ATP5F1A; the interaction inhibits most of the angiogenic effects of angiostatin. In terms of processing, in the presence of the inhibitor, the activation involves only cleavage after Arg-576, yielding two chains held together by two disulfide bonds. In the absence of the inhibitor, the activation involves additionally the removal of the activation peptide.

It localises to the secreted. It catalyses the reaction Preferential cleavage: Lys-|-Xaa &gt; Arg-|-Xaa, higher selectivity than trypsin. Converts fibrin into soluble products.. Its activity is regulated as follows. Converted into plasmin by plasminogen activators, both plasminogen and its activator being bound to fibrin. Activated with catalytic amounts of streptokinase. Plasmin dissolves the fibrin of blood clots and acts as a proteolytic factor in a variety of other processes including embryonic development, tissue remodeling, tumor invasion, and inflammation. In ovulation, weakens the walls of the Graafian follicle. It activates the urokinase-type plasminogen activator, collagenases and several complement zymogens, such as C1, C4 and C5. Cleavage of fibronectin and laminin leads to cell detachment and apoptosis. Also cleaves fibrin, thrombospondin and von Willebrand factor. Its role in tissue remodeling and tumor invasion may be modulated by CSPG4. Binds to cells. The sequence is that of Plasminogen (PLG) from Notamacropus eugenii (Tammar wallaby).